A 394-amino-acid polypeptide reads, in one-letter code: MRSLSIFGATGSIGESTFDLVMRKGGPEAFRTVALTGGRNIRRLAEMARALKAELAVTAHEDCLPALREALAGTGTEVAGGAQAIAEAADRPADWTMSAIVGAAGLVPGMRALKHGRTLALANKESLVTAGQLLMRTARENGATILPVDSEHSAVFQALAGEDTACVERVIITASGGPFRDWSLERIRACTVAEAQAHPNWSMGQRISIDSASMFNKALELIETREFFGFEPDRIEAVVHPQSIVHAMVGFCDGGLMAHLGPADMRHAIGFALNWPGRGEVPVARIDLAQIASLTFQRPDEERFPALRLARDVMAARGLSGAAFNAAKEIALDHFIAGRIGFLDMAAVVEETLAGVSTDPLFGKVPDALEEVLAMDHLARRAAEEAAGLRQQKR.

Residues T10, G11, S12, I13, G38, R39, N40, and N123 each coordinate NADPH. K124 contributes to the 1-deoxy-D-xylulose 5-phosphate binding site. E125 is a binding site for NADPH. D149 is a Mn(2+) binding site. Residues S150, E151, S175, and H198 each coordinate 1-deoxy-D-xylulose 5-phosphate. E151 contacts Mn(2+). G204 is an NADPH binding site. The 1-deoxy-D-xylulose 5-phosphate site is built by S211, N216, K217, and E220. E220 contributes to the Mn(2+) binding site.

It belongs to the DXR family. It depends on Mg(2+) as a cofactor. Requires Mn(2+) as cofactor.

The catalysed reaction is 2-C-methyl-D-erythritol 4-phosphate + NADP(+) = 1-deoxy-D-xylulose 5-phosphate + NADPH + H(+). Its pathway is isoprenoid biosynthesis; isopentenyl diphosphate biosynthesis via DXP pathway; isopentenyl diphosphate from 1-deoxy-D-xylulose 5-phosphate: step 1/6. In terms of biological role, catalyzes the NADPH-dependent rearrangement and reduction of 1-deoxy-D-xylulose-5-phosphate (DXP) to 2-C-methyl-D-erythritol 4-phosphate (MEP). In Cereibacter sphaeroides (strain ATCC 17023 / DSM 158 / JCM 6121 / CCUG 31486 / LMG 2827 / NBRC 12203 / NCIMB 8253 / ATH 2.4.1.) (Rhodobacter sphaeroides), this protein is 1-deoxy-D-xylulose 5-phosphate reductoisomerase.